The sequence spans 1684 residues: Protein Wiz (1684 aa).

The tract at residues 1–77 (MEGLLAGGLA…PGLSEALPRA (77 aa)) is disordered. The segment covering 13 to 24 (DHPRGPAPREDI) has biased composition (basic and acidic residues). 5 C2H2-type zinc fingers span residues 308–330 (FPCI…MSQH), 345–367 (LACS…WQLH), 454–477 (NTCV…RLVH), 734–756 (RKCP…VRGH), and 802–824 (MRCD…ARAH). The tract at residues 854–876 (LPPSPLGREPGGPPRSFLTSRRP) is disordered. A C2H2-type 6 zinc finger spans residues 903 to 925 (TTCEVCGACFETRKGLSSHARSH). Glycyl lysine isopeptide (Lys-Gly) (interchain with G-Cter in SUMO2) cross-links involve residues K916, K972, K988, K1000, and K1021. The tract at residues 1005–1072 (FSAKGLTHPS…PLNLTSGPEP (68 aa)) is disordered. S1029 bears the Phosphoserine mark. T1031 is subject to Phosphothreonine. Glycyl lysine isopeptide (Lys-Gly) (interchain with G-Cter in SUMO2) cross-links involve residues K1033 and K1038. A phosphoserine mark is found at S1039 and S1045. Over residues 1040–1057 (PQLSLSPRPTSPKAQWPQ) the composition is skewed to polar residues. Phosphothreonine is present on T1049. A phosphoserine mark is found at S1050 and S1058. The interval 1063–1067 (PLNLT) is interaction with CTBP1 and CTBP2 1. Residues 1076 to 1098 (IRCEFCGEFFENRKGLSSHARSH) form a C2H2-type 7 zinc finger. K1089 is covalently cross-linked (Glycyl lysine isopeptide (Lys-Gly) (interchain with G-Cter in SUMO2)). A phosphoserine mark is found at S1112 and S1139. A disordered region spans residues 1127-1208 (SRPGGHLHPP…GLATPSLPKK (82 aa)). Residues K1141 and K1145 each participate in a glycyl lysine isopeptide (Lys-Gly) (interchain with G-Cter in SUMO2) cross-link. S1155, S1160, and S1167 each carry phosphoserine. Glycyl lysine isopeptide (Lys-Gly) (interchain with G-Cter in SUMO2) cross-links involve residues K1171 and K1172. A phosphoserine mark is found at S1179 and S1184. An N6,N6,N6-trimethyllysine; by EHMT2; alternate modification is found at K1195. N6,N6-dimethyllysine; by EHMT2; alternate is present on K1195. K1210 participates in a covalent cross-link: Glycyl lysine isopeptide (Lys-Gly) (interchain with G-Cter in SUMO2). The tract at residues 1247–1251 (PLNLS) is interaction with CTBP1 and CTBP2 2. A C2H2-type 8 zinc finger spans residues 1260–1282 (IRCEFCGEFFENRKGLSSHARSH). K1273 is covalently cross-linked (Glycyl lysine isopeptide (Lys-Gly) (interchain with G-Cter in SUMO2)). Phosphoserine is present on S1296. Residue K1315 forms a Glycyl lysine isopeptide (Lys-Gly) (interchain with G-Cter in SUMO2) linkage. The disordered stretch occupies residues 1320-1384 (AGDLAPALTE…SKPSAASYLG (65 aa)). Low complexity predominate over residues 1335-1351 (AAPGALHSPLPLSPLAS). Phosphoserine occurs at positions 1342 and 1347. Residues K1376, K1389, K1403, K1405, and K1415 each participate in a glycyl lysine isopeptide (Lys-Gly) (interchain with G-Cter in SUMO2) cross-link. The C2H2-type 9 zinc finger occupies 1430–1452 (ACCELCGLYFENRKALASHARAH). Glycyl lysine isopeptide (Lys-Gly) (interchain with G-Cter in SUMO2) cross-links involve residues K1481, K1497, and K1510. Disordered regions lie at residues 1496–1587 (TKKF…GEEV) and 1592–1611 (QKLE…PSLV). S1550 carries the phosphoserine modification. A Glycyl lysine isopeptide (Lys-Gly) (interchain with G-Cter in SUMO1); alternate cross-link involves residue K1556. K1556 is covalently cross-linked (Glycyl lysine isopeptide (Lys-Gly) (interchain with G-Cter in SUMO2); alternate). The segment covering 1556-1574 (KSEEHQRQNINKFERRQAR) has biased composition (basic and acidic residues). Glycyl lysine isopeptide (Lys-Gly) (interchain with G-Cter in SUMO2) cross-links involve residues K1567 and K1593. A compositionally biased stretch (pro residues) spans 1599-1611 (QPPPRVRPVPSLV). A C2H2-type 10 zinc finger spans residues 1629-1655 (LKCRFCEVEFQGPLSIQEEWVRHLQRH). The disordered stretch occupies residues 1662-1684 (SKADPPPEEPQAPQAQTAAVEAP). A Glycyl lysine isopeptide (Lys-Gly) (interchain with G-Cter in SUMO2) cross-link involves residue K1663. The span at 1672 to 1684 (QAPQAQTAAVEAP) shows a compositional bias: low complexity.

Belongs to the krueppel C2H2-type zinc-finger protein family. In terms of assembly, part of a complex containing at least CDYL, REST, WIZ, SETB1, EHMT1 and EHMT2. Interacts with EHMT1, EHMT2, CTBP1 and CTBP2. As to expression, according to PubMed:9795207, isoform L and isoform S are brain-specific. According to PubMed:16702210, isoform S is ubiquitously expressed.

It is found in the nucleus. In terms of biological role, may link EHMT1 and EHMT2 histone methyltransferases to the CTBP corepressor machinery. May be involved in EHMT1-EHMT2 heterodimer formation and stabilization. The protein is Protein Wiz (Wiz) of Mus musculus (Mouse).